Consider the following 170-residue polypeptide: Shikimate kinase (170 aa).

15–20 provides a ligand contact to ATP; it reads GAGKTT. Threonine 19 lines the Mg(2+) pocket. 3 residues coordinate substrate: aspartate 37, arginine 61, and glycine 83. An ATP-binding site is contributed by arginine 121. A substrate-binding site is contributed by arginine 140.

This sequence belongs to the shikimate kinase family. As to quaternary structure, monomer. Mg(2+) serves as cofactor.

It localises to the cytoplasm. It carries out the reaction shikimate + ATP = 3-phosphoshikimate + ADP + H(+). The protein operates within metabolic intermediate biosynthesis; chorismate biosynthesis; chorismate from D-erythrose 4-phosphate and phosphoenolpyruvate: step 5/7. Catalyzes the specific phosphorylation of the 3-hydroxyl group of shikimic acid using ATP as a cosubstrate. The chain is Shikimate kinase from Neisseria gonorrhoeae (strain ATCC 700825 / FA 1090).